We begin with the raw amino-acid sequence, 274 residues long: Diaminopimelate epimerase (274 aa).

Substrate is bound by residues Asn-11, Gln-44, and Asn-64. The active-site Proton donor is Cys-73. Substrate contacts are provided by residues 74-75 (GN), Asn-157, Asn-190, and 208-209 (ER). Residue Cys-217 is the Proton acceptor of the active site. 218–219 (GS) lines the substrate pocket.

The protein belongs to the diaminopimelate epimerase family. In terms of assembly, homodimer.

The protein localises to the cytoplasm. It catalyses the reaction (2S,6S)-2,6-diaminopimelate = meso-2,6-diaminopimelate. It participates in amino-acid biosynthesis; L-lysine biosynthesis via DAP pathway; DL-2,6-diaminopimelate from LL-2,6-diaminopimelate: step 1/1. Catalyzes the stereoinversion of LL-2,6-diaminopimelate (L,L-DAP) to meso-diaminopimelate (meso-DAP), a precursor of L-lysine and an essential component of the bacterial peptidoglycan. The sequence is that of Diaminopimelate epimerase from Escherichia coli O81 (strain ED1a).